Reading from the N-terminus, the 389-residue chain is Putative F-box/kelch-repeat protein At4g35120 (389 aa).

The F-box domain occupies 24 to 70 (SMSISSLPDEIVLSFLALISKSYYRSLSLVSKSFYSLLSSTEIYAAR). Kelch repeat units lie at residues 128-174 (EIYK…FLDG), 176-225 (IYVI…AVSG), and 227-273 (RLYV…MKPI).

The chain is Putative F-box/kelch-repeat protein At4g35120 from Arabidopsis thaliana (Mouse-ear cress).